The chain runs to 384 residues: Calreticulin-3 (384 aa).

Residues 1–19 (MAAARVPLWAICVRRVALA) form the signal peptide. The tract at residues 20 to 197 (TVYFQEEFLD…GQSIESGSIE (178 aa)) is N-domain. Asn-42 carries an N-linked (GlcNAc...) asparagine glycan. Cys-105 and Cys-137 are joined by a disulfide. An alpha-D-glucoside contacts are provided by Tyr-109, Lys-111, Tyr-128, and Asp-135. Repeat copies occupy residues 191 to 202 (IESGSIEYDWQL), 209 to 220 (EKASAEAEGWDQ), 222 to 231 (AKDKSQDWEK), 235 to 246 (DASASKPSDWKG), 250 to 260 (GDWQAAMLQKP), 264 to 272 (DGLKPEGID), and 274 to 284 (DVWLHQKMKNS). The segment at 191–246 (IESGSIEYDWQLTSLKKMEKASAEAEGWDQAAKDKSQDWEKHFLDASASKPSDWKG) is 4 X approximate repeats. The tract at residues 198–294 (YDWQLTSLKK…YLTEYDLSEF (97 aa)) is P-domain. The interval 250 to 284 (GDWQAAMLQKPPYQDGLKPEGIDKDVWLHQKMKNS) is 3 X approximate repeats. Positions 295 to 384 (ENIGAVGLEL…FKGFHRRNEF (90 aa)) are C-domain. Residue Glu-303 participates in an alpha-D-glucoside binding. Residues 381–384 (RNEF) carry the Prevents secretion from ER motif.

It belongs to the calreticulin family. As to quaternary structure, component of an EIF2 complex at least composed of CELF1/CUGBP1, CALR, CALR3, EIF2S1, EIF2S2, HSP90B1 and HSPA5.

The protein resides in the endoplasmic reticulum lumen. Functionally, during spermatogenesis, may act as a lectin-independent chaperone for specific client proteins such as ADAM3. CALR3 capacity for calcium-binding may be absent or much lower than that of CALR. Required for sperm fertility. The sequence is that of Calreticulin-3 (CALR3) from Bos taurus (Bovine).